Here is a 398-residue protein sequence, read N- to C-terminus: Chalcone synthase 1 (398 aa).

CoA is bound at residue 58-65 (KFKRMCDK). Residue Cys167 is the Acyl-thioester intermediate of the active site. Residues Thr200 and 219 to 220 (GD) each bind substrate. CoA is bound at residue Ala311.

This sequence belongs to the thiolase-like superfamily. Chalcone/stilbene synthases family. In terms of assembly, homodimer.

The enzyme catalyses (E)-4-coumaroyl-CoA + 3 malonyl-CoA + 3 H(+) = 2',4,4',6'-tetrahydroxychalcone + 3 CO2 + 4 CoA. The protein operates within secondary metabolite biosynthesis; flavonoid biosynthesis. The primary product of this enzyme is 4,2',4',6'-tetrahydroxychalcone (also termed naringenin-chalcone or chalcone) which can under specific conditions spontaneously isomerize into naringenin. The protein is Chalcone synthase 1 (CHS1) of Oryza sativa subsp. japonica (Rice).